The primary structure comprises 674 residues: Putative kinase-like protein TMKL1 (674 aa).

Positions 1-25 (MGMEALRFLHVIFFFVLILHCHCGT) are cleaved as a signal peptide. Residues 26–295 (SLSGSSDVKL…PLKPCLGSSR (270 aa)) are Extracellular-facing. N57, N90, N95, and N110 each carry an N-linked (GlcNAc...) asparagine glycan. LRR repeat units follow at residues 100-122 (HLLS…IGEF), 124-146 (MLQS…LGYT), 148-169 (SLSD…SIWN), and 173-194 (KLVS…PALP). Residues N183 and N195 are each glycosylated (N-linked (GlcNAc...) asparagine). 3 LRR repeats span residues 200–222 (NLQV…ITRF), 224–244 (GVKS…EGLG), and 247–269 (ELES…GESK). Residues N252 and N257 are each glycosylated (N-linked (GlcNAc...) asparagine). Residues 296-323 (LSPGAVAGLVIGLMSGAVVVASLLIGYL) form a helical membrane-spanning segment. Topologically, residues 324–674 (QNKKRKSSIE…ETRSDAETPF (351 aa)) are cytoplasmic. Residues 331–350 (SIESEDDLEEGDEEDEIGEK) form a disordered region. Acidic residues predominate over residues 333–348 (ESEDDLEEGDEEDEIG). S334 carries the phosphoserine modification. The 302-residue stretch at 373 to 674 (NATGQVMEKT…ETRSDAETPF (302 aa)) folds into the Protein kinase domain. T375 carries the phosphothreonine modification. Phosphoserine is present on S454. The interval 649–674 (LEENRPRNRSALYSPTETRSDAETPF) is disordered.

It belongs to the protein kinase superfamily.

It is found in the membrane. In terms of biological role, does not seem to have conserved a kinase activity. This is Putative kinase-like protein TMKL1 (TMKL1) from Arabidopsis thaliana (Mouse-ear cress).